We begin with the raw amino-acid sequence, 257 residues long: RING-H2 finger protein ATL5 (257 aa).

A helical membrane pass occupies residues 28-48; it reads IMLASVIILFVAVILILCFHS. The segment at 113–155 adopts an RING-type; atypical zinc-finger fold; the sequence is CSVCLSEFEEDDEGRVLPKCGHVFHVDCIDTWFRSRSSCPLCR. The disordered stretch occupies residues 181–209; it reads EDTEAGSSSSSDESESSTPSSSSGSPVRF. The span at 185–206 shows a compositional bias: low complexity; the sequence is AGSSSSSDESESSTPSSSSGSP.

This sequence belongs to the RING-type zinc finger family. ATL subfamily.

It localises to the membrane. The enzyme catalyses S-ubiquitinyl-[E2 ubiquitin-conjugating enzyme]-L-cysteine + [acceptor protein]-L-lysine = [E2 ubiquitin-conjugating enzyme]-L-cysteine + N(6)-ubiquitinyl-[acceptor protein]-L-lysine.. It participates in protein modification; protein ubiquitination. This chain is RING-H2 finger protein ATL5 (ATL5), found in Arabidopsis thaliana (Mouse-ear cress).